A 98-amino-acid chain; its full sequence is NADH-ubiquinone oxidoreductase chain 4L (98 aa).

3 helical membrane passes run 1 to 21 (MTSI…GVLV), 28 to 48 (STLL…ALLI), and 59 to 79 (APLI…ALLV).

Belongs to the complex I subunit 4L family. In terms of assembly, core subunit of respiratory chain NADH dehydrogenase (Complex I) which is composed of 45 different subunits.

It localises to the mitochondrion inner membrane. The catalysed reaction is a ubiquinone + NADH + 5 H(+)(in) = a ubiquinol + NAD(+) + 4 H(+)(out). In terms of biological role, core subunit of the mitochondrial membrane respiratory chain NADH dehydrogenase (Complex I) which catalyzes electron transfer from NADH through the respiratory chain, using ubiquinone as an electron acceptor. Part of the enzyme membrane arm which is embedded in the lipid bilayer and involved in proton translocation. The polypeptide is NADH-ubiquinone oxidoreductase chain 4L (MT-ND4L) (Dactylopsila trivirgata (Striped possum)).